We begin with the raw amino-acid sequence, 426 residues long: Glutamate-1-semialdehyde 2,1-aminomutase (426 aa).

Lys-265 is subject to N6-(pyridoxal phosphate)lysine.

The protein belongs to the class-III pyridoxal-phosphate-dependent aminotransferase family. HemL subfamily. In terms of assembly, homodimer. The cofactor is pyridoxal 5'-phosphate.

The protein localises to the cytoplasm. The enzyme catalyses (S)-4-amino-5-oxopentanoate = 5-aminolevulinate. Its pathway is porphyrin-containing compound metabolism; protoporphyrin-IX biosynthesis; 5-aminolevulinate from L-glutamyl-tRNA(Glu): step 2/2. The protein is Glutamate-1-semialdehyde 2,1-aminomutase of Actinobacillus pleuropneumoniae serotype 7 (strain AP76).